The sequence spans 100 residues: Aspartyl/glutamyl-tRNA(Asn/Gln) amidotransferase subunit C (100 aa).

Belongs to the GatC family. As to quaternary structure, heterotrimer of A, B and C subunits.

It carries out the reaction L-glutamyl-tRNA(Gln) + L-glutamine + ATP + H2O = L-glutaminyl-tRNA(Gln) + L-glutamate + ADP + phosphate + H(+). It catalyses the reaction L-aspartyl-tRNA(Asn) + L-glutamine + ATP + H2O = L-asparaginyl-tRNA(Asn) + L-glutamate + ADP + phosphate + 2 H(+). In terms of biological role, allows the formation of correctly charged Asn-tRNA(Asn) or Gln-tRNA(Gln) through the transamidation of misacylated Asp-tRNA(Asn) or Glu-tRNA(Gln) in organisms which lack either or both of asparaginyl-tRNA or glutaminyl-tRNA synthetases. The reaction takes place in the presence of glutamine and ATP through an activated phospho-Asp-tRNA(Asn) or phospho-Glu-tRNA(Gln). This Streptococcus mutans serotype c (strain ATCC 700610 / UA159) protein is Aspartyl/glutamyl-tRNA(Asn/Gln) amidotransferase subunit C.